The following is a 346-amino-acid chain: DNA-directed RNA polymerases I and III subunit RPAC1 (346 aa).

The residue at position 2 (Ala2) is an N-acetylalanine. Ser4 is subject to Phosphoserine.

It belongs to the archaeal Rpo3/eukaryotic RPB3 RNA polymerase subunit family. As to quaternary structure, component of the RNA polymerase I and RNA polymerase III complexes consisting of at least 13 and 17 subunits, respectively. Pol I complex consists of a ten-subunit catalytic core composed of POLR1A/RPA1, POLR1B/RPA2, POLR1C/RPAC1, POLR1D/RPAC2, POLR1H/RPA12, POLR2E/RPABC1, POLR2F/RPABC2, POLR2H/RPABC3, POLR2K/RPABC4 and POLR2L/RPABC5; a mobile stalk subunit POLR1F/RPA43 protruding from the core and additional subunits homologous to general transcription factors POLR1E/RPA49 and POLR1G/RPA34. Part of Pol I pre-initiation complex (PIC), in which Pol I core assembles with RRN3 and promoter-bound UTBF and SL1/TIF-IB complex. Pol III complex consists of a ten-subunit catalytic core composed of POLR3A/RPC1, POLR3B/RPC2, POLR1C/RPAC1, POLR1D/RPAC2, POLR3K/RPC10, POLR2E/RPABC1, POLR2F/RPABC2, POLR2H/RPABC3, POLR2K/RPABC4 and POLR2L/RPABC5; a mobile stalk composed of two subunits POLR3H/RPC8 and CRCP/RPC9, protruding from the core and functioning primarily in transcription initiation; and additional subunits homologous to general transcription factors of the RNA polymerase II machinery, POLR3C/RPC3-POLR3F/RPC6-POLR3G/RPC7 heterotrimer required for transcription initiation and POLR3D/RPC4-POLR3E/RPC5 heterodimer involved in both transcription initiation and termination.

The protein resides in the nucleus. It localises to the nucleolus. It is found in the cytoplasm. Its subcellular location is the cytosol. DNA-dependent RNA polymerase catalyzes the transcription of DNA into RNA using the four ribonucleoside triphosphates as substrates. Common component of RNA polymerases I and III which synthesize ribosomal RNA precursors and short non-coding RNAs including 5S rRNA, snRNAs, tRNAs and miRNAs, respectively. POLR1C/RPAC1 is part of the polymerase core and may function as a clamp element that moves to open and close the cleft. In Homo sapiens (Human), this protein is DNA-directed RNA polymerases I and III subunit RPAC1.